Here is an 84-residue protein sequence, read N- to C-terminus: Turripeptide IX-01 (84 aa).

Residues 1–21 (MGFYMLLTVALLLTSFMSVEA) form the signal peptide. Positions 22–39 (TPVDQAERSAMKESGLAH) are excised as a propeptide. 3 disulfides stabilise this stretch: Cys48/Cys70, Cys55/Cys74, and Cys60/Cys81.

Expressed by the venom duct.

The protein resides in the secreted. The chain is Turripeptide IX-01 from Gemmula speciosa (Splendid gem-turris).